We begin with the raw amino-acid sequence, 761 residues long: 52 kDa repressor of the inhibitor of the protein kinase (761 aa).

A THAP-type zinc finger spans residues methionine 1–phenylalanine 86. Residues glutamine 116–threonine 132 are compositionally biased toward basic and acidic residues. Positions glutamine 116–aspartate 149 are disordered. The residue at position 566 (serine 566) is a Phosphoserine.

In terms of assembly, interacts with DNAJC3, probably sequestring it.

Functionally, upstream regulator of interferon-induced serine/threonine protein kinase R (PKR). May block the PKR-inhibitory function of DNAJC3, resulting in restoration of kinase activity and suppression of cell growth. In Homo sapiens (Human), this protein is 52 kDa repressor of the inhibitor of the protein kinase.